Consider the following 508-residue polypeptide: Light-independent protochlorophyllide reductase subunit B (508 aa).

Aspartate 36 is a binding site for [4Fe-4S] cluster. The Proton donor role is filled by aspartate 294. 429–430 (GM) contacts substrate.

The protein belongs to the ChlB/BchB/BchZ family. As to quaternary structure, protochlorophyllide reductase is composed of three subunits; ChlL, ChlN and ChlB. Forms a heterotetramer of two ChlB and two ChlN subunits. It depends on [4Fe-4S] cluster as a cofactor.

It carries out the reaction chlorophyllide a + oxidized 2[4Fe-4S]-[ferredoxin] + 2 ADP + 2 phosphate = protochlorophyllide a + reduced 2[4Fe-4S]-[ferredoxin] + 2 ATP + 2 H2O. It participates in porphyrin-containing compound metabolism; chlorophyll biosynthesis (light-independent). Its function is as follows. Component of the dark-operative protochlorophyllide reductase (DPOR) that uses Mg-ATP and reduced ferredoxin to reduce ring D of protochlorophyllide (Pchlide) to form chlorophyllide a (Chlide). This reaction is light-independent. The NB-protein (ChlN-ChlB) is the catalytic component of the complex. The protein is Light-independent protochlorophyllide reductase subunit B of Acaryochloris marina (strain MBIC 11017).